The chain runs to 157 residues: Succinate dehydrogenase assembly factor 2-B, mitochondrial (157 aa).

The transit peptide at 1–22 directs the protein to the mitochondrion; that stretch reads MLSQWFRGRHLVVRSALFSRRR.

This sequence belongs to the SDHAF2 family. As to quaternary structure, interacts with the flavoprotein subunit within the SDH catalytic dimer.

The protein localises to the mitochondrion matrix. Functionally, plays an essential role in the assembly of succinate dehydrogenase (SDH), an enzyme complex (also referred to as respiratory complex II) that is a component of both the tricarboxylic acid (TCA) cycle and the mitochondrial electron transport chain, and which couples the oxidation of succinate to fumarate with the reduction of ubiquinone (coenzyme Q) to ubiquinol. Required for flavinylation (covalent attachment of FAD) of the flavoprotein subunit of the SDH catalytic dimer. The protein is Succinate dehydrogenase assembly factor 2-B, mitochondrial of Drosophila mojavensis (Fruit fly).